Here is a 545-residue protein sequence, read N- to C-terminus: ATP synthase subunit alpha (545 aa).

173-180 (GDRQTGKS) serves as a coordination point for ATP.

Belongs to the ATPase alpha/beta chains family. As to quaternary structure, F-type ATPases have 2 components, CF(1) - the catalytic core - and CF(0) - the membrane proton channel. CF(1) has five subunits: alpha(3), beta(3), gamma(1), delta(1), epsilon(1). CF(0) has three main subunits: a(1), b(2) and c(9-12). The alpha and beta chains form an alternating ring which encloses part of the gamma chain. CF(1) is attached to CF(0) by a central stalk formed by the gamma and epsilon chains, while a peripheral stalk is formed by the delta and b chains.

The protein localises to the cell membrane. The catalysed reaction is ATP + H2O + 4 H(+)(in) = ADP + phosphate + 5 H(+)(out). Functionally, produces ATP from ADP in the presence of a proton gradient across the membrane. The alpha chain is a regulatory subunit. This Arthrobacter sp. (strain FB24) protein is ATP synthase subunit alpha.